Here is a 307-residue protein sequence, read N- to C-terminus: Probable GTP 3',8-cyclase (307 aa).

Residues 4 to 222 (ALGREVRSVR…RTFHSREVYR (219 aa)) form the Radical SAM core domain. Residue arginine 13 coordinates GTP. Residues cysteine 20 and cysteine 24 each contribute to the [4Fe-4S] cluster site. Tyrosine 26 contributes to the S-adenosyl-L-methionine binding site. Cysteine 27 serves as a coordination point for [4Fe-4S] cluster. Position 60 (lysine 60) interacts with GTP. Residues glycine 64 and serine 112 each contribute to the S-adenosyl-L-methionine site. Lysine 150 contributes to the GTP binding site. Cysteine 240 and cysteine 243 together coordinate [4Fe-4S] cluster. Residue 245-247 (RIR) participates in GTP binding. Cysteine 257 serves as a coordination point for [4Fe-4S] cluster.

Belongs to the radical SAM superfamily. MoaA family. [4Fe-4S] cluster serves as cofactor.

The catalysed reaction is GTP + AH2 + S-adenosyl-L-methionine = (8S)-3',8-cyclo-7,8-dihydroguanosine 5'-triphosphate + 5'-deoxyadenosine + L-methionine + A + H(+). It participates in cofactor biosynthesis; molybdopterin biosynthesis. Functionally, catalyzes the cyclization of GTP to (8S)-3',8-cyclo-7,8-dihydroguanosine 5'-triphosphate. This is Probable GTP 3',8-cyclase from Methanopyrus kandleri (strain AV19 / DSM 6324 / JCM 9639 / NBRC 100938).